A 131-amino-acid chain; its full sequence is Large ribosomal subunit protein bL17 (131 aa).

It belongs to the bacterial ribosomal protein bL17 family. Part of the 50S ribosomal subunit. Contacts protein L32.

In Shewanella oneidensis (strain ATCC 700550 / JCM 31522 / CIP 106686 / LMG 19005 / NCIMB 14063 / MR-1), this protein is Large ribosomal subunit protein bL17.